The chain runs to 288 residues: Quinate/shikimate dehydrogenase (288 aa).

Substrate contacts are provided by Lys71 and Asp107. NAD(+) contacts are provided by residues 132-135 (AGGA), 155-158 (NRRD), Lys205, 232-235 (CVYN), and Gly255.

The protein belongs to the shikimate dehydrogenase family. Homodimer.

It carries out the reaction L-quinate + NAD(+) = 3-dehydroquinate + NADH + H(+). The catalysed reaction is L-quinate + NADP(+) = 3-dehydroquinate + NADPH + H(+). The enzyme catalyses shikimate + NADP(+) = 3-dehydroshikimate + NADPH + H(+). It catalyses the reaction shikimate + NAD(+) = 3-dehydroshikimate + NADH + H(+). Its pathway is metabolic intermediate biosynthesis; chorismate biosynthesis; chorismate from D-erythrose 4-phosphate and phosphoenolpyruvate: step 4/7. The actual biological function of YdiB remains unclear, nor is it known whether 3-dehydroshikimate or quinate represents the natural substrate. Catalyzes the reversible NAD-dependent reduction of both 3-dehydroshikimate (DHSA) and 3-dehydroquinate to yield shikimate (SA) and quinate, respectively. It can use both NAD or NADP for catalysis, however it has higher catalytic efficiency with NAD. In Shigella sonnei (strain Ss046), this protein is Quinate/shikimate dehydrogenase.